Consider the following 257-residue polypeptide: NAD-capped RNA hydrolase NudC (257 aa).

K25 and R69 together coordinate substrate. Zn(2+) is bound by residues C98 and C101. E111 is a substrate binding site. Residues C116 and C119 each coordinate Zn(2+). Y124 lines the substrate pocket. The Nudix hydrolase domain occupies 125 to 248 (PQIAPCIIVA…TVARRLIEDT (124 aa)). Residues A158, E174, and E178 each contribute to the a divalent metal cation site. The Nudix box signature appears at 159-180 (GFVEVGETLEQAVAREVMEESG). A substrate-binding site is contributed by 192–199 (QPWPFPQS). E219 contacts a divalent metal cation. A241 serves as a coordination point for substrate.

Belongs to the Nudix hydrolase family. NudC subfamily. In terms of assembly, homodimer. The cofactor is Mg(2+). It depends on Mn(2+) as a cofactor. Zn(2+) is required as a cofactor.

It catalyses the reaction a 5'-end NAD(+)-phospho-ribonucleoside in mRNA + H2O = a 5'-end phospho-adenosine-phospho-ribonucleoside in mRNA + beta-nicotinamide D-ribonucleotide + 2 H(+). The enzyme catalyses NAD(+) + H2O = beta-nicotinamide D-ribonucleotide + AMP + 2 H(+). The catalysed reaction is NADH + H2O = reduced beta-nicotinamide D-ribonucleotide + AMP + 2 H(+). In terms of biological role, mRNA decapping enzyme that specifically removes the nicotinamide adenine dinucleotide (NAD) cap from a subset of mRNAs by hydrolyzing the diphosphate linkage to produce nicotinamide mononucleotide (NMN) and 5' monophosphate mRNA. The NAD-cap is present at the 5'-end of some mRNAs and stabilizes RNA against 5'-processing. Has preference for mRNAs with a 5'-end purine. Catalyzes the hydrolysis of a broad range of dinucleotide pyrophosphates. In Escherichia coli O127:H6 (strain E2348/69 / EPEC), this protein is NAD-capped RNA hydrolase NudC.